Reading from the N-terminus, the 356-residue chain is Heparan sulfate 2-O-sulfotransferase 1 (356 aa).

Topologically, residues 1–11 (MGLLRIMMPPK) are cytoplasmic. The helical; Signal-anchor for type II membrane protein transmembrane segment at 12–28 (LQLLAVVAFAVAMLFLE) threads the bilayer. Residues 24-51 (MLFLENQIQKLEESRSKLERAIARHEVR) are a coiled coil. Over 29-356 (NQIQKLEESR…FYEKIYPKSN (328 aa)) the chain is Lumenal. Positions 83, 84, 85, 86, 87, and 88 each coordinate adenosine 3',5'-bisphosphate. 2 N-linked (GlcNAc...) asparagine glycosylation sites follow: Asn-108 and Asn-127. Residues His-140 and His-142 contribute to the active site. The adenosine 3',5'-bisphosphate site is built by Arg-164 and Ser-172. Disulfide bonds link Cys-201/Cys-209 and Cys-222/Cys-228. Adenosine 3',5'-bisphosphate contacts are provided by Tyr-279, Ser-285, Thr-290, and Lys-293.

The protein belongs to the sulfotransferase 3 family. In terms of assembly, homotrimer. Interacts with the C5-epimerase GLCE. N-glycosylated.

It is found in the golgi apparatus membrane. Catalyzes the transfer of a sulfo group from 3'-phospho-5'-adenylyl sulfate (PAPS) to the 2-OH position of iduronic acid (IdoA) or glucuronic acid (GlcA) within the heparan sulfate (HS) chain and participates in HS biosynthesis. Required for metanephric development of kidney formation, suggesting that 2-O-sulfation within HS is essential for signaling between ureteric bud and metanephric mesenchyme. In Pongo abelii (Sumatran orangutan), this protein is Heparan sulfate 2-O-sulfotransferase 1.